Consider the following 115-residue polypeptide: Aspartate 1-decarboxylase (115 aa).

The Schiff-base intermediate with substrate; via pyruvic acid role is filled by serine 24. At serine 24 the chain carries Pyruvic acid (Ser). Residue threonine 56 participates in substrate binding. Tyrosine 57 acts as the Proton donor in catalysis. 72 to 74 contacts substrate; the sequence is GAA.

Belongs to the PanD family. In terms of assembly, heterooctamer of four alpha and four beta subunits. Requires pyruvate as cofactor. In terms of processing, is synthesized initially as an inactive proenzyme, which is activated by self-cleavage at a specific serine bond to produce a beta-subunit with a hydroxyl group at its C-terminus and an alpha-subunit with a pyruvoyl group at its N-terminus.

The protein resides in the cytoplasm. The enzyme catalyses L-aspartate + H(+) = beta-alanine + CO2. It functions in the pathway cofactor biosynthesis; (R)-pantothenate biosynthesis; beta-alanine from L-aspartate: step 1/1. Functionally, catalyzes the pyruvoyl-dependent decarboxylation of aspartate to produce beta-alanine. This is Aspartate 1-decarboxylase from Pseudothermotoga lettingae (strain ATCC BAA-301 / DSM 14385 / NBRC 107922 / TMO) (Thermotoga lettingae).